A 392-amino-acid polypeptide reads, in one-letter code: L-rhamnonate dehydratase (392 aa).

Substrate-binding residues include H22 and R48. Residues D214, E240, and E268 each coordinate Mg(2+). H318 (proton acceptor) is an active-site residue. Substrate is bound at residue E338.

The protein belongs to the mandelate racemase/muconate lactonizing enzyme family. RhamD subfamily. As to quaternary structure, homooctamer; tetramer of dimers. It depends on Mg(2+) as a cofactor.

It carries out the reaction L-rhamnonate = 2-dehydro-3-deoxy-L-rhamnonate + H2O. Catalyzes the dehydration of L-rhamnonate to 2-keto-3-deoxy-L-rhamnonate (KDR). This is L-rhamnonate dehydratase from Burkholderia orbicola (strain MC0-3).